The sequence spans 281 residues: Putative pyruvate, phosphate dikinase regulatory protein (281 aa).

150-157 (GVSRTSKT) serves as a coordination point for ADP.

Belongs to the pyruvate, phosphate/water dikinase regulatory protein family. PDRP subfamily.

It catalyses the reaction N(tele)-phospho-L-histidyl/L-threonyl-[pyruvate, phosphate dikinase] + ADP = N(tele)-phospho-L-histidyl/O-phospho-L-threonyl-[pyruvate, phosphate dikinase] + AMP + H(+). The catalysed reaction is N(tele)-phospho-L-histidyl/O-phospho-L-threonyl-[pyruvate, phosphate dikinase] + phosphate + H(+) = N(tele)-phospho-L-histidyl/L-threonyl-[pyruvate, phosphate dikinase] + diphosphate. Bifunctional serine/threonine kinase and phosphorylase involved in the regulation of the pyruvate, phosphate dikinase (PPDK) by catalyzing its phosphorylation/dephosphorylation. The polypeptide is Putative pyruvate, phosphate dikinase regulatory protein (Sorangium cellulosum (strain So ce56) (Polyangium cellulosum (strain So ce56))).